The following is a 215-amino-acid chain: Glutathione S-transferase D2 (215 aa).

Residues 1–80 enclose the GST N-terminal domain; that stretch reads MDFYYMPGGG…YLVEKYGKDD (80 aa). Residues 50–52 and 64–66 each bind glutathione; these read HTI and ESR. The 127-residue stretch at 86-212 folds into the GST C-terminal domain; sequence DPKKRAVINQ…MKALFDARKL (127 aa).

Belongs to the GST superfamily. Delta family. As to quaternary structure, homodimer.

It catalyses the reaction RX + glutathione = an S-substituted glutathione + a halide anion + H(+). Conjugation of reduced glutathione to a wide number of exogenous and endogenous hydrophobic electrophiles. May be involved in detoxification. This chain is Glutathione S-transferase D2, found in Drosophila melanogaster (Fruit fly).